We begin with the raw amino-acid sequence, 258 residues long: Venom plasminogen activator Haly-PA (258 aa).

The N-terminal stretch at methionine 1–alanine 18 is a signal peptide. The propeptide occupies glutamine 19 to leucine 24. One can recognise a Peptidase S1 domain in the interval valine 25–alanine 249. Intrachain disulfides connect cysteine 31/cysteine 163, cysteine 50/cysteine 66, cysteine 98/cysteine 256, cysteine 142/cysteine 210, cysteine 174/cysteine 189, and cysteine 200/cysteine 225. Asparagine 44 is a glycosylation site (N-linked (GlcNAc...) asparagine). Residues histidine 65 and aspartate 110 each act as charge relay system in the active site. Catalysis depends on serine 204, which acts as the Charge relay system.

This sequence belongs to the peptidase S1 family. Snake venom subfamily. In terms of assembly, monomer. Post-translationally, glycosylated. Expressed by the venom gland.

The protein localises to the secreted. Snake venom serine protease that activates plasminogen. Displays indirect fibrino(geno)lytic activity through conversion of plasminogen to plasmin. Shows a preferential cleavage at Arg-|-Xaa instead of Lys-|-Xaa bonds. The sequence is that of Venom plasminogen activator Haly-PA from Gloydius brevicauda (Korean slamosa snake).